Reading from the N-terminus, the 106-residue chain is Small ribosomal subunit protein uS10 (106 aa).

Belongs to the universal ribosomal protein uS10 family. Part of the 30S ribosomal subunit.

In terms of biological role, involved in the binding of tRNA to the ribosomes. This Pyrobaculum calidifontis (strain DSM 21063 / JCM 11548 / VA1) protein is Small ribosomal subunit protein uS10.